We begin with the raw amino-acid sequence, 457 residues long: Peptidyl-prolyl cis-trans isomerase FKBP5 (457 aa).

The residue at position 1 (methionine 1) is an N-acetylmethionine. Over residues 1–11 the composition is skewed to basic and acidic residues; it reads MTTDEGAKNSR. The disordered stretch occupies residues 1–27; that stretch reads MTTDEGAKNSRENPTATVAEQGEDVTS. Lysine 28 carries the post-translational modification N6-acetyllysine. PPIase FKBP-type domains lie at 50-138 and 165-251; these read GDKV…LDFK and GARV…KSFE. 3 TPR repeats span residues 268–301, 317–350, and 351–384; these read AAIVKEKGTLYFKGGKYVQAVIQYGKIVSWLEME, LAAFLNLAMCYLKLREYTKAVECCDKALGLDSAN, and EKGLYRRGEAQLLMNEFESAKGDFEKVLEVNPQN. The disordered stretch occupies residues 423–457; the sequence is EEANKAMSKKTSEGVTNEKLAVSHAVEEEKPEGHV. Residue serine 445 is modified to Phosphoserine. Residues 447-457 are compositionally biased toward basic and acidic residues; sequence AVEEEKPEGHV.

As to quaternary structure, part of a heteromultimeric cytoplasmic complex with HSP90AA1, HSPA1A/HSPA1B and steroid receptors. Upon ligand binding dissociates from the complex and FKBP4 takes its place. Interacts with functionally mature heterooligomeric progesterone receptor complexes along with HSP90 and TEBP. Interacts with NR3C1. Interacts with Akt/AKT1 and PHLPP1; enhancing dephosphorylation and subsequent activation of Akt/AKT1. Interacts with IFI44L; this interaction modulates the kinase activity of IKBKB and IKBKE. Interacts with IKBKB and IKBKE. In terms of processing, acetylation impairs ability to promote interaction between Akt/AKT1 and PHLPP1. Deacetylation by SIRT7 promotes interaction between Akt/AKT1 and PHLPP1, leading to suppress Akt/AKT1 activation. Ubiquitinated, leading to degradation in a proteasome-dependent manner. Deubiquitinated by USP49, leading to stabilization.

Its subcellular location is the cytoplasm. The protein resides in the nucleus. It carries out the reaction [protein]-peptidylproline (omega=180) = [protein]-peptidylproline (omega=0). With respect to regulation, inhibited by both FK506 and rapamycin. Functionally, immunophilin protein with PPIase and co-chaperone activities. Component of unligated steroid receptors heterocomplexes through interaction with heat-shock protein 90 (HSP90). Plays a role in the intracellular trafficking of heterooligomeric forms of steroid hormone receptors maintaining the complex into the cytoplasm when unliganded. Acts as a regulator of Akt/AKT1 activity by promoting the interaction between Akt/AKT1 and PHLPP1, thereby enhancing dephosphorylation and subsequent activation of Akt/AKT1. Interacts with IKBKE and IKBKB which facilitates IKK complex assembly leading to increased IKBKE and IKBKB kinase activity, NF-kappaB activation, and IFN production. The chain is Peptidyl-prolyl cis-trans isomerase FKBP5 (FKBP5) from Aotus nancymaae (Ma's night monkey).